A 101-amino-acid chain; its full sequence is Small ribosomal subunit protein uS14 (101 aa).

The protein belongs to the universal ribosomal protein uS14 family. In terms of assembly, part of the 30S ribosomal subunit. Contacts proteins S3 and S10.

Its function is as follows. Binds 16S rRNA, required for the assembly of 30S particles and may also be responsible for determining the conformation of the 16S rRNA at the A site. In Pseudomonas putida (strain GB-1), this protein is Small ribosomal subunit protein uS14.